We begin with the raw amino-acid sequence, 180 residues long: Non-structural protein 4 (180 aa).

The next 2 membrane-spanning stretches (helical) occupy residues 16–36 and 52–72; these read VCVH…VTVI and IVST…AILG.

Its subcellular location is the host membrane. The polypeptide is Non-structural protein 4 (Segment-11) (Banna virus (BAV)).